Here is a 46-residue protein sequence, read N- to C-terminus: Acetylajmalan esterase (46 aa).

N-linked (GlcNAc...) asparagine glycosylation is present at asparagine 39.

It belongs to the 'GDSL' lipolytic enzyme family.

The enzyme catalyses 17-O-acetylajmaline + H2O = ajmaline + acetate + H(+). The catalysed reaction is 17-O-acetylnorajmaline + H2O = norajmaline + acetate + H(+). Its function is as follows. Deacetylates 17-O-acetylajmaline and 17-O-acetylnorajmaline, but is inactive toward other acetylated alkaloids. The polypeptide is Acetylajmalan esterase (Rauvolfia verticillata (Common devil-pepper)).